We begin with the raw amino-acid sequence, 137 residues long: Large-conductance mechanosensitive channel (137 aa).

The next 2 helical transmembrane spans lie at 9–29 and 79–99; these read AFAV…GAAF and IQTI…VKAI.

The protein belongs to the MscL family. In terms of assembly, homopentamer.

It is found in the cell inner membrane. Channel that opens in response to stretch forces in the membrane lipid bilayer. May participate in the regulation of osmotic pressure changes within the cell. The chain is Large-conductance mechanosensitive channel from Pseudomonas aeruginosa (strain UCBPP-PA14).